The primary structure comprises 88 residues: Phosphocarrier protein HPr (88 aa).

One can recognise an HPr domain in the interval 2 to 88; the sequence is AQKTFKVTAD…ETMKSEGLGE (87 aa). Ser-12 carries the phosphoserine modification. The Pros-phosphohistidine intermediate; alternate role is filled by His-15. His-15 is modified (tele-phosphohistidine; alternate). Position 46 is a phosphoserine; by HPrK/P (Ser-46).

It belongs to the HPr family. Post-translationally, phosphorylated during sporulation.

The protein localises to the cytoplasm. Phosphorylation on Ser-46 inhibits the phosphoryl transfer from enzyme I to HPr. Its function is as follows. General (non sugar-specific) component of the phosphoenolpyruvate-dependent sugar phosphotransferase system (sugar PTS). This major carbohydrate active-transport system catalyzes the phosphorylation of incoming sugar substrates concomitantly with their translocation across the cell membrane. The phosphoryl group from phosphoenolpyruvate (PEP) is transferred to the phosphoryl carrier protein HPr by enzyme I. Phospho-HPr then transfers it to the PTS EIIA domain. In terms of biological role, P-Ser-HPr interacts with the catabolite control protein A (CcpA), forming a complex that binds to DNA at the catabolite response elements cre, operator sites preceding a large number of catabolite-regulated genes. Thus, P-Ser-HPr is a corepressor in carbon catabolite repression (CCR), a mechanism that allows bacteria to coordinate and optimize the utilization of available carbon sources. P-Ser-HPr also plays a role in inducer exclusion, in which it probably interacts with several non-PTS permeases and inhibits their transport activity. This chain is Phosphocarrier protein HPr (ptsH), found in Bacillus subtilis (strain 168).